The primary structure comprises 115 residues: Pre-histone-like nucleoprotein (115 aa).

A propeptide spanning residues 2–23 is cleaved from the precursor; it reads PILISPSDNTGWGLGKLRIRAT. Basic residues predominate over residues 85 to 99; the sequence is GRRTARSARRRSARK. Positions 85–115 are disordered; sequence GRRTARSARRRSARKSRSEKTGPRIRYTRRI. The Nuclear localization signal signature appears at 114 to 115; it reads RI.

The protein belongs to the adenoviridae histone-like nucleoprotein family. Interacts with the core-capsid bridging protein; this interaction bridges the virus core to the capsid. Interacts with host NPM1; this interaction might play a role in placing the pre-histone-like nucleoprotein on the viral DNA or regulating viral gene expression. Interacts with host HMGB1; this interaction inhibits host immune response. Post-translationally, cleaved near the N-terminus by the viral protease during virion maturation to form the mature protein.

It is found in the virion. The protein localises to the host nucleus. The protein resides in the host nucleolus. Plays a role in the inhibition of host immune response within the nucleus. Interacts with cellular nucleosomes and immobilizes the host immune danger signal HMGB1 on chromatin. In turn, prevents HMGB1 release out of the cell and thus decreases inflammation. Also plays a role in the wrapping and condensation of the viral DNA. May also promote viral genome import into the nucleus. The polypeptide is Pre-histone-like nucleoprotein (Pantherophis guttatus (Corn snake)).